The sequence spans 360 residues: Probable nuclear hormone receptor HR38 (360 aa).

A disordered region spans residues 1–21 (GSSSPGVAPADNTGPRAAPSS). Residues 23–98 (SQLCAVCGDT…VGMVKEVVRT (76 aa)) constitute a DNA-binding region (nuclear receptor). 2 consecutive NR C4-type zinc fingers follow at residues 26–46 (CAVC…CEGC) and 62–86 (CLAE…FQKC). Residues 122–357 (PPISLITALV…PLIENMFRAS (236 aa)) enclose the NR LBD domain.

It belongs to the nuclear hormone receptor family. NR4 subfamily. Forms a heterodimer with USP.

Its subcellular location is the nucleus. The polypeptide is Probable nuclear hormone receptor HR38 (HR38) (Bombyx mori (Silk moth)).